A 110-amino-acid polypeptide reads, in one-letter code: Insulin-2 (110 aa).

The signal sequence occupies residues 1 to 24 (MALWMRFLPLLALLFLWESHPTQA). 3 disulfides stabilise this stretch: cysteine 31-cysteine 96, cysteine 43-cysteine 109, and cysteine 95-cysteine 100. Residues 57–87 (EVEDPQVAQLELGGGPGAGDLQTLALEVAQQ) constitute a propeptide, c peptide.

The protein belongs to the insulin family. As to quaternary structure, heterodimer of a B chain and an A chain linked by two disulfide bonds.

The protein resides in the secreted. Insulin decreases blood glucose concentration. It increases cell permeability to monosaccharides, amino acids and fatty acids. It accelerates glycolysis, the pentose phosphate cycle, and glycogen synthesis in liver. The protein is Insulin-2 (Ins2) of Mus musculus (Mouse).